The following is a 400-amino-acid chain: 3-phenylpropionate/cinnamic acid dioxygenase ferredoxin--NAD(+) reductase component (400 aa).

5–36 (TIIIVGGGQAAAMAAASLRQQGFTGELHLFSD) is a binding site for FAD. 146–174 (SVVIVGAGTIGLELAASATQRGCKATVIE) contributes to the NAD(+) binding site.

The protein belongs to the bacterial ring-hydroxylating dioxygenase ferredoxin reductase family. This dioxygenase system consists of four proteins: the two subunits of the hydroxylase component (HcaE and HcaF), a ferredoxin (HcaC) and a ferredoxin reductase (HcaD). FAD serves as cofactor.

The catalysed reaction is 2 reduced [2Fe-2S]-[ferredoxin] + NAD(+) + H(+) = 2 oxidized [2Fe-2S]-[ferredoxin] + NADH. It participates in aromatic compound metabolism; 3-phenylpropanoate degradation. Part of the multicomponent 3-phenylpropionate dioxygenase, that converts 3-phenylpropionic acid (PP) and cinnamic acid (CI) into 3-phenylpropionate-dihydrodiol (PP-dihydrodiol) and cinnamic acid-dihydrodiol (CI-dihydrodiol), respectively. The protein is 3-phenylpropionate/cinnamic acid dioxygenase ferredoxin--NAD(+) reductase component of Escherichia coli O7:K1 (strain IAI39 / ExPEC).